Consider the following 130-residue polypeptide: Small ribosomal subunit protein uS8 (130 aa).

Belongs to the universal ribosomal protein uS8 family. In terms of assembly, part of the 30S ribosomal subunit. Contacts proteins S5 and S12.

One of the primary rRNA binding proteins, it binds directly to 16S rRNA central domain where it helps coordinate assembly of the platform of the 30S subunit. This Chromohalobacter salexigens (strain ATCC BAA-138 / DSM 3043 / CIP 106854 / NCIMB 13768 / 1H11) protein is Small ribosomal subunit protein uS8.